The chain runs to 213 residues: ATP-dependent Clp protease proteolytic subunit 1 (213 aa).

Catalysis depends on S108, which acts as the Nucleophile. H133 is a catalytic residue.

The protein belongs to the peptidase S14 family. Fourteen ClpP subunits assemble into 2 heptameric rings which stack back to back to give a disk-like structure with a central cavity, resembling the structure of eukaryotic proteasomes.

The protein localises to the cytoplasm. It catalyses the reaction Hydrolysis of proteins to small peptides in the presence of ATP and magnesium. alpha-casein is the usual test substrate. In the absence of ATP, only oligopeptides shorter than five residues are hydrolyzed (such as succinyl-Leu-Tyr-|-NHMec, and Leu-Tyr-Leu-|-Tyr-Trp, in which cleavage of the -Tyr-|-Leu- and -Tyr-|-Trp bonds also occurs).. Its function is as follows. Cleaves peptides in various proteins in a process that requires ATP hydrolysis. Has a chymotrypsin-like activity. Plays a major role in the degradation of misfolded proteins. In Frankia casuarinae (strain DSM 45818 / CECT 9043 / HFP020203 / CcI3), this protein is ATP-dependent Clp protease proteolytic subunit 1.